A 336-amino-acid polypeptide reads, in one-letter code: MSGTQMSAFLRQYLADEDKKIRAQFKESDPNNKLILWMHEKTRITEEDLARPYTEDEVKELCLRTKVKVDMTAWNCLWEAKKRFEAKGRFVNKSERFINRMYVKAVRKKMVQPYPEEFVAQRREVVAAETKKHNISRLDRWQRKKTQNLSAQESSPARGAHLSFIDAMQTHEDQVNANLSSVSQINFQVEAIARPAVSSSDLSGIGDDEDEHQQSEFQDEHINCPETAINENSVRCDPINSGRMRTGCINSQGNNNTESDPDYYMFGTQLSSLLRPTSTQEPDDQVNCPETEMNESWVRCDQINSESMSIGPSIDSEGTITFQNSESEPIDVDSIA.

A required for binding to Su(var)205 region spans residues 107 to 328 (RKKMVQPYPE…TITFQNSESE (222 aa)). 2 disordered regions span residues 137–158 (RLDR…SPAR) and 199–218 (SSDL…SEFQ). Short sequence motifs (su(var)205-binding Pro-containing repeat) lie at residues 225 to 231 (PETAINE) and 289 to 295 (PETEMNE). Over residues 308-327 (MSIGPSIDSEGTITFQNSES) the composition is skewed to polar residues. Positions 308 to 336 (MSIGPSIDSEGTITFQNSESEPIDVDSIA) are disordered.

In terms of assembly, interacts (via C-terminus) with Su(var)205 dimer (via hinge and chromoshadow domain) and with moi to form the terminin, telomere-capping, complex. Interacts with HP6, which is also part of the terminin complex.

It localises to the nucleus. Its subcellular location is the chromosome. The protein localises to the telomere. Functionally, binds to chromosome ends in a sequence-dependent manner and is required for telomere capping. The polypeptide is Telomere-binding protein cav (Drosophila sechellia (Fruit fly)).